The primary structure comprises 258 residues: UBX domain-containing protein 2A (258 aa).

Residues 1–152 (MKEVDNLDSI…SATPRIVSKA (152 aa)) are required for interaction with CHRNA3. Residues 1 to 165 (MKEVDNLDSI…EVDNKSTLSA (165 aa)) are required for inhibition of CHRNA3 ubiquitination and translocation of CHRNA3 to the plasma membrane resulting in an increase in acetylcholine-gated nicotinic acetylcholine receptor currents. The SEP domain maps to 61 to 125 (QVDVNIKLWK…VEDKKNEVCM (65 aa)). Positions 168 to 258 (LNNLEPITRI…QKTAEPFRKL (91 aa)) are required for interaction with VCP. The 78-residue stretch at 170-247 (NLEPITRIQI…DLQNAVIIQR (78 aa)) folds into the UBX domain.

As to quaternary structure, part of a complex composed of STUB1/CHIP, VCP/p97, CHRNA3, and UBXN2A that modulates the ubiquitination and endoplasmic reticulum-associated degradation (ERAD) of CHRNA3. Within the complex UBXN2A acts as a scaffold protein required for the interaction of CHRNA3 with VCP/p97, this interaction also inhibits CHRNA3 ubiquitination by STUB1/CHIP and subsequently ERAD. Interacts (via SEP domain) with CHRNA3 and interacts (via UBX domain) with VCP/P97; these interactions are required for the interaction of CHRNA3 with the STUB1-VCP-UBXN2A complex. Interacts with HSPA9/MOT-2 (via SBD domain); the interaction inhibits HSPA9/MOT-2 interaction with and degradation of p53, thereby promotes p53 translocation to the nucleus. Interacts with RICTOR. Post-translationally, ubiquitinated.

The protein resides in the golgi apparatus. It is found in the endoplasmic reticulum. It localises to the perikaryon. The protein localises to the cell projection. Its subcellular location is the dendrite. The protein resides in the nucleus. It is found in the cytoplasm. Acts to repress the ubiquitination and subsequent endoplasmic reticulum-associated degradation of CHRNA3 by the STUB1-VCP-UBXN2A complex in cortical neurons. Also acts to promote the translocation of CHRNA3 to the plasma membrane and subsequently increases plasma membrane acetylcholine-gated ion-channel activation. Plays a role in the inhibition of STUB1-mediated TP53 degradation, via its interaction with HSPA9 which acts to inhibit TP53 binding to HSPA9. Positively mediates the ubiquitination and proteosomal degradation of RICTOR, may thereby act as a negative regulator of the mTORC2 pathway. In Rattus norvegicus (Rat), this protein is UBX domain-containing protein 2A.